A 501-amino-acid polypeptide reads, in one-letter code: Cytochrome P450 7A1 (501 aa).

Residues 4 to 24 (IFWIWGICLSVCCCLWLILGL) traverse the membrane as a helical segment. Cys-441 provides a ligand contact to heme.

This sequence belongs to the cytochrome P450 family. Requires heme as cofactor. As to expression, detected in liver.

Its subcellular location is the endoplasmic reticulum membrane. The protein localises to the microsome membrane. It carries out the reaction cholesterol + reduced [NADPH--hemoprotein reductase] + O2 = 7alpha-hydroxycholesterol + oxidized [NADPH--hemoprotein reductase] + H2O + H(+). The catalysed reaction is 4beta-hydroxycholesterol + reduced [NADPH--hemoprotein reductase] + O2 = 4beta,7alpha-dihydroxycholesterol + oxidized [NADPH--hemoprotein reductase] + H2O + H(+). The enzyme catalyses lathosterol + reduced [NADPH--hemoprotein reductase] + O2 = 7alpha,8alpha-epoxy-5alpha-cholestan-3beta-ol + oxidized [NADPH--hemoprotein reductase] + H2O + H(+). It catalyses the reaction lathosterol + reduced [NADPH--hemoprotein reductase] + O2 = 5alpha-cholestan-7-oxo-3beta-ol + oxidized [NADPH--hemoprotein reductase] + H2O + H(+). It carries out the reaction 7-dehydrocholesterol + reduced [NADPH--hemoprotein reductase] + O2 = 7-oxocholesterol + oxidized [NADPH--hemoprotein reductase] + H2O + H(+). The catalysed reaction is (24S)-hydroxycholesterol + reduced [NADPH--hemoprotein reductase] + O2 = (24S)-7alpha-dihydroxycholesterol + oxidized [NADPH--hemoprotein reductase] + H2O + H(+). The enzyme catalyses (24R)-hydroxycholesterol + reduced [NADPH--hemoprotein reductase] + O2 = (24R)-7alpha-dihydroxycholesterol + oxidized [NADPH--hemoprotein reductase] + H2O + H(+). Its pathway is lipid metabolism; bile acid biosynthesis. It participates in steroid metabolism; cholesterol degradation. In terms of biological role, a cytochrome P450 monooxygenase involved in the metabolism of endogenous cholesterol and its oxygenated derivatives (oxysterols). Mechanistically, uses molecular oxygen inserting one oxygen atom into a substrate, and reducing the second into a water molecule, with two electrons provided by NADPH via cytochrome P450 reductase (CPR; NADPH-ferrihemoprotein reductase). Functions as a critical regulatory enzyme of bile acid biosynthesis and cholesterol homeostasis. Catalyzes the hydroxylation of carbon hydrogen bond at 7-alpha position of cholesterol, a rate-limiting step in cholesterol catabolism and bile acid biosynthesis. 7-alpha hydroxylates several oxysterols, including 4beta-hydroxycholesterol and 24-hydroxycholesterol. Catalyzes the oxidation of the 7,8 double bond of 7-dehydrocholesterol and lathosterol with direct and predominant formation of the 7-keto derivatives. This chain is Cytochrome P450 7A1 (CYP7A1), found in Oryctolagus cuniculus (Rabbit).